Here is a 1463-residue protein sequence, read N- to C-terminus: Nucleoporin NUP152 (1463 aa).

3 disordered regions span residues 1 to 199, 339 to 568, and 609 to 1064; these read MDPP…GRPG, GIPD…ELPA, and TTKK…FGNT. Polar residues-rich tracts occupy residues 32–42, 81–92, 144–155, 175–191, 367–378, and 416–472; these read STNSNSVTANA, GPSSKLSQSVSA, TSSKATSFSGAP, TTYT…QSFP, PSSSTFTHTASP, and PAKT…SSNI. Residues 481–498 are compositionally biased toward acidic residues; the sequence is KDEDNESDTGSEAEAEDE. Composition is skewed to low complexity over residues 511 to 523 and 616 to 630; these read GASS…GGES and AAAP…TPTT. Polar residues-rich tracts occupy residues 651-664, 673-689, and 720-746; these read IFGS…TSIP, PATS…TSAA, and TTES…TQPQ. Residues 729-732 form an FXFG 1 repeat; it reads FQFG. The segment covering 753–768 has biased composition (low complexity); it reads KPPSTETPTEKPATTS. Residues 777–789 are compositionally biased toward polar residues; it reads PATTSSLFGSATT. Low complexity predominate over residues 803–813; that stretch reads TTTPADKPTTT. The span at 814-828 shows a compositional bias: polar residues; sequence NLFGSTSTQATSGSD. One copy of the FXFG 2 repeat lies at 835–838; it reads FAFG. Positions 840–863 are enriched in polar residues; the sequence is TTESKPTTSLFGSTTPAPATSTEN. A compositionally biased stretch (low complexity) spans 870–881; it reads ATTTSATPATNT. Polar residues-rich tracts occupy residues 900 to 923, 940 to 961, 968 to 987, 998 to 1029, and 1037 to 1055; these read GSST…STEQ, GSTS…TMTE, SIST…STTE, STEQ…STEQ, and PAST…TTEN. The stretch at 910-913 is one FXFG 3 repeat; sequence FQFG. FXFG repeat units lie at residues 1074 to 1077, 1127 to 1130, 1141 to 1144, and 1152 to 1155; these read FNFG and FTFG. Disordered stretches follow at residues 1155–1174 and 1179–1217; these read GASS…PIFS and QPSS…KHVP. Residues 1156–1170 are compositionally biased toward low complexity; the sequence is ASSDSSNASNNASSA. The FXFG 8 repeat unit spans residues 1173–1176; it reads FSFG. The segment covering 1179–1199 has biased composition (polar residues); it reads QPSSTPLFGQNNPPAASNIFA. An FXFG 9 repeat occupies 1236–1239; that stretch reads FTFG. The span at 1240–1271 shows a compositional bias: low complexity; that stretch reads GASSLATTPAASTPEPSAANAAAAGEDQGASA. Disordered stretches follow at residues 1240–1335 and 1416–1463; these read GASS…PWKV and AALE…DEKK. Residues 1289–1427 enclose the RanBD1 domain; sequence GEEDESVVHE…LEEHKKANEK (139 aa). Residues 1418–1463 show a composition bias toward basic and acidic residues; it reads LEEHKKANEKKDGEKNEESEKKDEKQEEKKNEEKKDEKEEKKDEKK.

The nuclear pore complex (NPC) constitutes the exclusive means of nucleocytoplasmic transport. NPCs allow the passive diffusion of ions and small molecules and the active, nuclear transport receptor-mediated bidirectional transport of macromolecules such as proteins, RNAs, ribonucleoparticles (RNPs), and ribosomal subunits across the nuclear envelope. The 55-60 MDa NPC is composed of at least 28 different subunits: AMO1, ELYS, GLE1, GLE2, MLP1, NDC1, NIC96, NSP1, NUP133, NUP145, NUP152, NUP159, NUP170, NUP188, NUP192, NUP37, NUP49, NUP53, NUP56, NUP57, NUP82, NUP84, NUP85, POM152, POM33, POM34, SEC13 and SEH1. Due to its 8-fold rotational symmetry, all subunits are present with 8 copies or multiples thereof.

Its subcellular location is the nucleus. The protein resides in the nuclear pore complex. It is found in the nucleus membrane. Functionally, functions as a component of the nuclear pore complex (NPC). NPC components, collectively referred to as nucleoporins (NUPs), can play the role of both NPC structural components and of docking or interaction partners for transiently associated nuclear transport factors. Active directional transport is assured by both, a Phe-Gly (FG) repeat affinity gradient for these transport factors across the NPC and a transport cofactor concentration gradient across the nuclear envelope (GSP1 and GSP2 GTPases associated predominantly with GTP in the nucleus, with GDP in the cytoplasm). The polypeptide is Nucleoporin NUP152 (NUP152) (Chaetomium thermophilum (strain DSM 1495 / CBS 144.50 / IMI 039719) (Thermochaetoides thermophila)).